The sequence spans 130 residues: MKDWLDEIHWNSDGLVPAIAQDHKTGRVLMMAWMNREALSLTASENRAIYWSRSRGKLWRKGEESGHVQKLHELRLDCDADVIILMVEQIGGIACHTGRESCFYRVYENSGWKTVDPVLKDPDAIYSAGH.

Aspartate 77 is a Mg(2+) binding site. A Zn(2+)-binding site is contributed by cysteine 78. Residues aspartate 79 and aspartate 81 each coordinate Mg(2+). Residues cysteine 95 and cysteine 102 each coordinate Zn(2+).

This sequence belongs to the PRA-CH family. Homodimer. Mg(2+) is required as a cofactor. Zn(2+) serves as cofactor.

It is found in the cytoplasm. It carries out the reaction 1-(5-phospho-beta-D-ribosyl)-5'-AMP + H2O = 1-(5-phospho-beta-D-ribosyl)-5-[(5-phospho-beta-D-ribosylamino)methylideneamino]imidazole-4-carboxamide. It functions in the pathway amino-acid biosynthesis; L-histidine biosynthesis; L-histidine from 5-phospho-alpha-D-ribose 1-diphosphate: step 3/9. In terms of biological role, catalyzes the hydrolysis of the adenine ring of phosphoribosyl-AMP. The chain is Phosphoribosyl-AMP cyclohydrolase from Pseudomonas savastanoi pv. phaseolicola (strain 1448A / Race 6) (Pseudomonas syringae pv. phaseolicola (strain 1448A / Race 6)).